The chain runs to 358 residues: Septin-12 (358 aa).

The tract at residues 1–25 (MDPLRRSPSPCLSSQPSSPSTPPCE) is disordered. The segment covering 6-18 (RSPSPCLSSQPSS) has biased composition (low complexity). In terms of domain architecture, Septin-type G spans 46 to 317 (MGFEFNIMVV…ENYRVIRLNE (272 aa)). Positions 46–319 (MGFEFNIMVV…YRVIRLNESH (274 aa)) are interaction with SEPTIN7. Residues 56-63 (GQSGLGKS) are G1 motif. GTP-binding positions include 56–63 (GQSGLGKS), threonine 89, glycine 115, 195–203 (RADSLTMEE), glycine 251, and arginine 266. The segment at 112–115 (DTPG) is G3 motif. The tract at residues 194–197 (ARAD) is G4 motif. The segment at 258–358 (VNGRCVLGRK…GAHDDSDDEF (101 aa)) is self-association (via N-terminus) to polymerize octameric septin 12-7-6-2/4-2/4-6-7-12 filaments.

Belongs to the TRAFAC class TrmE-Era-EngA-EngB-Septin-like GTPase superfamily. Septin GTPase family. As to quaternary structure, septins polymerize into heterooligomeric protein complexes that form filaments, and can associate with cellular membranes, actin filaments and microtubules. GTPase activity is required for filament formation. Interacts with SEPTIN6 and SEPTIN11. Self-associates. Component of a septin core octameric complex consisting of SEPTIN12, SEPTIN7, SEPTIN6 and SEPTIN2 or SEPTIN4 in the order 12-7-6-2-2-6-7-12 or 12-7-6-4-4-6-7-12 and located in the sperm annulus; the octamer polymerizes into filaments via the SEPTIN12 N- and C-termini; the SEPTIN12:SEPTIN7 association is mediated by the respective GTP-binding domains. Interacts with SPAG4 and LMNB1. Associates with alpha- and beta-tubulins. As to expression, widely expressed. Expressed in lymph node.

The protein resides in the cytoplasm. It localises to the cytoskeleton. It is found in the spindle. The protein localises to the nucleus. Its subcellular location is the cell projection. The protein resides in the cilium. It localises to the flagellum. Its function is as follows. Filament-forming cytoskeletal GTPase. Involved in spermatogenesis. Involved in the morphogenesis of sperm heads and the elongation of sperm tails probably implicating the association with alpha- and beta-tubulins. Forms a filamentous structure with SEPTIN7, SEPTIN6, SEPTIN2 and probably SEPTIN4 at the sperm annulus which is required for the structural integrity and motility of the sperm tail during postmeiotic differentiation. May play a role in cytokinesis (Potential). The chain is Septin-12 from Homo sapiens (Human).